The sequence spans 266 residues: Undecaprenyl-diphosphatase (266 aa).

8 consecutive transmembrane segments (helical) span residues M1 to G21, F43 to I63, L81 to I101, V109 to V129, L159 to G179, P183 to L203, Y219 to M239, and S246 to Y266.

Belongs to the UppP family.

The protein localises to the cell inner membrane. The enzyme catalyses di-trans,octa-cis-undecaprenyl diphosphate + H2O = di-trans,octa-cis-undecaprenyl phosphate + phosphate + H(+). Catalyzes the dephosphorylation of undecaprenyl diphosphate (UPP). Confers resistance to bacitracin. This chain is Undecaprenyl-diphosphatase, found in Fusobacterium nucleatum subsp. nucleatum (strain ATCC 25586 / DSM 15643 / BCRC 10681 / CIP 101130 / JCM 8532 / KCTC 2640 / LMG 13131 / VPI 4355).